The following is a 355-amino-acid chain: Ribosomal RNA small subunit methyltransferase H (355 aa).

S-adenosyl-L-methionine contacts are provided by residues 47–49 (GGY), D65, F92, D113, and Q120. Residues 332–355 (LLPLATLPETSHPKSASHSKSRRR) are disordered. Positions 346–355 (SASHSKSRRR) are enriched in basic residues.

The protein belongs to the methyltransferase superfamily. RsmH family.

Its subcellular location is the cytoplasm. The catalysed reaction is cytidine(1402) in 16S rRNA + S-adenosyl-L-methionine = N(4)-methylcytidine(1402) in 16S rRNA + S-adenosyl-L-homocysteine + H(+). Its function is as follows. Specifically methylates the N4 position of cytidine in position 1402 (C1402) of 16S rRNA. In Beijerinckia indica subsp. indica (strain ATCC 9039 / DSM 1715 / NCIMB 8712), this protein is Ribosomal RNA small subunit methyltransferase H.